A 290-amino-acid polypeptide reads, in one-letter code: TIMELESS-interacting protein (290 aa).

The interval 1–59 (MLEPQENGLTDLPDYEHIEDETFPPFPPPASPGREDGEGAEPEEESGRGAPVPVPPKRT) is disordered. The segment at 67 to 143 (LNAERLISER…KEVQTCLKRI (77 aa)) is interaction with TIMELESS. Ser194 and Ser222 each carry phosphoserine. The span at 221 to 242 (NSQSLGNDLSVNTPSTQTSEAG) shows a compositional bias: polar residues. Residues 221–290 (NSQSLGNDLS…VEETQLDQSF (70 aa)) are disordered. Thr233 and Thr244 each carry phosphothreonine.

This sequence belongs to the CSM3 family. As to quaternary structure, interacts with TIMELESS (via N-terminus), which impairs TIMELESS self-association. Associates with the MCM2-7 complex. Interacts with RPA2, PRDX2.

Its subcellular location is the cytoplasm. It localises to the nucleus. In terms of biological role, plays an important role in the control of DNA replication and the maintenance of replication fork stability. Important for cell survival after DNA damage or replication stress. May be specifically required for the ATR-CHEK1 pathway in the replication checkpoint induced by hydroxyurea or ultraviolet light. Forms a complex with TIMELESS and this complex regulates DNA replication processes under both normal and stress conditions, stabilizes replication forks and influences both CHEK1 phosphorylation and the intra-S phase checkpoint in response to genotoxic stress. In Bos taurus (Bovine), this protein is TIMELESS-interacting protein (TIPIN).